The sequence spans 432 residues: Short/branched chain specific acyl-CoA dehydrogenase, mitochondrial (432 aa).

The transit peptide at 1-33 directs the protein to the mitochondrion; it reads MERATVRLLRGGALLRRNFPSCLSSWKTPPHAL. An N6-acetyllysine; alternate modification is found at lysine 70. Lysine 70 is modified (N6-succinyllysine; alternate). FAD is bound by residues 174–183 and 207–209; these read ICISETGAGS and WIS. Serine 183 is a substrate binding site. Serine 183 carries the post-translational modification Phosphoserine. Substrate contacts are provided by tyrosine 229 and tyrosine 283. Lysine 284 is subject to N6-acetyllysine; alternate. Lysine 284 is modified (N6-succinyllysine; alternate). 291 to 294 is a binding site for substrate; sequence NEGR. Residues arginine 319, glutamine 330, and 387 to 391 contribute to the FAD site; that span reads EWMGG. The active-site Proton acceptor is the glutamate 414. 416–418 lines the FAD pocket; it reads TSN. At lysine 426 the chain carries N6-acetyllysine.

It belongs to the acyl-CoA dehydrogenase family. Homotetramer. FAD is required as a cofactor.

It localises to the mitochondrion matrix. The enzyme catalyses 2-methylbutanoyl-CoA + oxidized [electron-transfer flavoprotein] + H(+) = (2E)-2-methylbut-2-enoyl-CoA + reduced [electron-transfer flavoprotein]. It carries out the reaction (2S)-2-methylbutanoyl-CoA + oxidized [electron-transfer flavoprotein] + H(+) = (2E)-2-methylbut-2-enoyl-CoA + reduced [electron-transfer flavoprotein]. The catalysed reaction is (2R)-2-methylbutanoyl-CoA + oxidized [electron-transfer flavoprotein] + H(+) = ethylacryloyl-CoA + reduced [electron-transfer flavoprotein]. It catalyses the reaction butanoyl-CoA + oxidized [electron-transfer flavoprotein] + H(+) = (2E)-butenoyl-CoA + reduced [electron-transfer flavoprotein]. The enzyme catalyses 2-methylpropanoyl-CoA + oxidized [electron-transfer flavoprotein] + H(+) = 2-methylpropenoyl-CoA + reduced [electron-transfer flavoprotein]. It carries out the reaction hexanoyl-CoA + oxidized [electron-transfer flavoprotein] + H(+) = (2E)-hexenoyl-CoA + reduced [electron-transfer flavoprotein]. The catalysed reaction is valproyl-CoA + oxidized [electron-transfer flavoprotein] + H(+) = (2E)-2-propylpent-2-enoyl-CoA + reduced [electron-transfer flavoprotein]. It participates in lipid metabolism; mitochondrial fatty acid beta-oxidation. It functions in the pathway amino-acid degradation; L-isoleucine degradation. Its function is as follows. Short and branched chain specific acyl-CoA dehydrogenase that catalyzes the removal of one hydrogen from C-2 and C-3 of the fatty acyl-CoA thioester, resulting in the formation of trans-2-enoyl-CoA. Among the different mitochondrial acyl-CoA dehydrogenases, acts specifically on short and branched chain acyl-CoA derivatives such as (S)-2-methylbutyryl-CoA as well as short straight chain acyl-CoAs such as butyryl-CoA. Plays an important role in the metabolism of L-isoleucine by catalyzing the dehydrogenation of 2-methylbutyryl-CoA, one of the steps of the L-isoleucine catabolic pathway. Can also act on valproyl-CoA, a metabolite of the valproic acid drug. This is Short/branched chain specific acyl-CoA dehydrogenase, mitochondrial (ACADSB) from Bos taurus (Bovine).